Consider the following 235-residue polypeptide: Purine nucleoside phosphorylase DeoD-type (235 aa).

His-4 contributes to the a purine D-ribonucleoside binding site. Residues Gly-20, Arg-24, Arg-43, and 87-90 (RVGT) contribute to the phosphate site. A purine D-ribonucleoside-binding positions include Glu-162, 179–181 (EME), and 203–204 (SD). The active-site Proton donor is the Asp-204.

Belongs to the PNP/UDP phosphorylase family. In terms of assembly, homohexamer; trimer of homodimers.

It catalyses the reaction a purine D-ribonucleoside + phosphate = a purine nucleobase + alpha-D-ribose 1-phosphate. The catalysed reaction is a purine 2'-deoxy-D-ribonucleoside + phosphate = a purine nucleobase + 2-deoxy-alpha-D-ribose 1-phosphate. Catalyzes the reversible phosphorolytic breakdown of the N-glycosidic bond in the beta-(deoxy)ribonucleoside molecules, with the formation of the corresponding free purine bases and pentose-1-phosphate. The protein is Purine nucleoside phosphorylase DeoD-type of Bacillus cereus (strain B4264).